Consider the following 295-residue polypeptide: Protease HtpX (295 aa).

2 helical membrane passes run 4 to 24 and 41 to 61; these read ILLFVATNLAVVLVASITLSL and SSLLVFCAVFGFAGSLVSLFI. His147 contributes to the Zn(2+) binding site. Glu148 is a catalytic residue. His151 is a binding site for Zn(2+). The next 2 helical transmembrane spans lie at 158-178 and 199-219; these read VTLALVQGVVNTFVMFFARII and VATIVAELILGILASMIVMWF. Residue Glu224 coordinates Zn(2+).

This sequence belongs to the peptidase M48B family. The cofactor is Zn(2+).

The protein localises to the cell inner membrane. The polypeptide is Protease HtpX (Pseudomonas putida (strain GB-1)).